A 264-amino-acid chain; its full sequence is tRNA (guanine-N(1)-)-methyltransferase (264 aa).

S-adenosyl-L-methionine is bound by residues G116 and 136–141; that span reads VGDFVL.

Belongs to the RNA methyltransferase TrmD family. Homodimer.

The protein localises to the cytoplasm. The enzyme catalyses guanosine(37) in tRNA + S-adenosyl-L-methionine = N(1)-methylguanosine(37) in tRNA + S-adenosyl-L-homocysteine + H(+). In terms of biological role, specifically methylates guanosine-37 in various tRNAs. This chain is tRNA (guanine-N(1)-)-methyltransferase, found in Koribacter versatilis (strain Ellin345).